We begin with the raw amino-acid sequence, 361 residues long: D-alanine--D-alanine ligase (361 aa).

The region spanning 134 to 344 (KLLLKSFDIP…FKDLVDNLID (211 aa)) is the ATP-grasp domain. 167–222 (KEVLGYPVIVKPAVLGSSIGINVAYSENQIESFIKEALKYDLTIVIEKFIEAREIE) is a binding site for ATP. The Mg(2+) site is built by aspartate 297, glutamate 311, and asparagine 313.

The protein belongs to the D-alanine--D-alanine ligase family. The cofactor is Mg(2+). Mn(2+) is required as a cofactor.

It localises to the cytoplasm. The catalysed reaction is 2 D-alanine + ATP = D-alanyl-D-alanine + ADP + phosphate + H(+). The protein operates within cell wall biogenesis; peptidoglycan biosynthesis. Functionally, cell wall formation. In Borreliella burgdorferi (strain ATCC 35210 / DSM 4680 / CIP 102532 / B31) (Borrelia burgdorferi), this protein is D-alanine--D-alanine ligase.